Consider the following 563-residue polypeptide: Solute carrier family 22 member 1 (563 aa).

At 1–21 the chain is on the cytoplasmic side; it reads MLTVDDVLEQVGEFGWFQKQT. The helical transmembrane segment at 22–42 threads the bilayer; it reads FLILCLLSAAFAPIYVGIVFL. Topologically, residues 43–144 are extracellular; that stretch reads AFTPDHRCRS…LVCDDSWKVD (102 aa). N-linked (GlcNAc...) asparagine glycosylation is present at Asn71. The helical transmembrane segment at 145-165 threads the bilayer; that stretch reads LFQSCVNLGFFLGSLGVGYIA. Over 166–171 the chain is Cytoplasmic; that stretch reads DRFGRK. Residues 172–192 form a helical membrane-spanning segment; it reads VCLLATTLTCASLGVLTAVAP. Residues 193–196 are Extracellular-facing; sequence DYTS. Residues 197 to 219 form a helical membrane-spanning segment; the sequence is LLIFRLLQGLVSKGSWTAGYTLI. Residues 220–232 lie on the Cytoplasmic side of the membrane; it reads TEFVGLGYRRTVA. The chain crosses the membrane as a helical span at residues 233–253; the sequence is ILYQMAFTVGLVLLSGLAYIL. Over 254–257 the chain is Extracellular; sequence PHWR. The chain crosses the membrane as a helical span at residues 258-278; the sequence is WLQLAVSLPIFLLLFRFWFVP. Residues 278–282 carry the Proline-rich sequence motif; it reads PESPR. Over 279–342 the chain is Cytoplasmic; that stretch reads ESPRWLLSQK…FRTPNLRKYT (64 aa). The residue at position 328 (Ser328) is a Phosphoserine. A helical transmembrane segment spans residues 343 to 363; it reads FILMYLWFTSSVVYQGLIMHV. The Extracellular segment spans residues 364–371; sequence GATGGNLY. The chain crosses the membrane as a helical span at residues 372 to 392; that stretch reads LDFLYSALVEFPAGFIILVTI. At 393–398 the chain is on the cytoplasmic side; it reads DRFGRR. Residues 399 to 418 form a helical membrane-spanning segment; the sequence is YPLATSNLAAGLACFLMIFI. Over 419–423 the chain is Extracellular; sequence PHDLP. A helical membrane pass occupies residues 424 to 446; that stretch reads WLNIMVACVGRMGITIVFQMVCL. The Cytoplasmic portion of the chain corresponds to 447 to 459; the sequence is VNAELFPTFIRNL. Residues 460–480 traverse the membrane as a helical segment; the sequence is GMMVCSSLCDLGGVLTPFLVF. At 481–487 the chain is on the extracellular side; it reads RLMEVWQ. The chain crosses the membrane as a helical span at residues 488-508; sequence GSPLILFAALGLVAGGMTLLL. Over 509–563 the chain is Cytoplasmic; it reads PETKGVTLPETIEDAENLQRKAKPKENKIYLQVQTSELNTQAAERDASQGTAQQK.

The protein belongs to the major facilitator (TC 2.A.1) superfamily. Organic cation transporter (TC 2.A.1.19) family. Post-translationally, phosphorylated.

Its subcellular location is the basolateral cell membrane. It localises to the apical cell membrane. It is found in the lateral cell membrane. The protein localises to the basal cell membrane. The protein resides in the cell membrane. It catalyses the reaction 1-methylnicotinamide(out) = 1-methylnicotinamide(in). The enzyme catalyses dopamine(out) = dopamine(in). It carries out the reaction serotonin(out) = serotonin(in). The catalysed reaction is (R)-adrenaline(out) = (R)-adrenaline(in). It catalyses the reaction (R)-noradrenaline(out) = (R)-noradrenaline(in). The enzyme catalyses histamine(out) = histamine(in). It carries out the reaction guanidine(out) = guanidine(in). The catalysed reaction is choline(out) = choline(in). It catalyses the reaction acetylcholine(in) = acetylcholine(out). The enzyme catalyses thiamine(in) = thiamine(out). It carries out the reaction spermidine(in) = spermidine(out). The catalysed reaction is agmatine(out) = agmatine(in). It catalyses the reaction putrescine(out) = putrescine(in). The enzyme catalyses (R)-carnitine(in) = (R)-carnitine(out). It carries out the reaction O-isobutanoyl-(R)-carnitine(in) = O-isobutanoyl-(R)-carnitine(out). The catalysed reaction is O-acetyl-(R)-carnitine(in) = O-acetyl-(R)-carnitine(out). It catalyses the reaction O-3-hydroxybutanoyl-(R)-carnitine(in) = O-3-hydroxybutanoyl-(R)-carnitine(out). The enzyme catalyses O-propanoyl-(R)-carnitine(in) = O-propanoyl-(R)-carnitine(out). It carries out the reaction O-butanoyl-(R)-carnitine(in) = O-butanoyl-(R)-carnitine(out). The catalysed reaction is O-2-methylbutanoyl-(R)-carnitine(in) = O-2-methylbutanoyl-(R)-carnitine(out). It catalyses the reaction O-3-methylbutanoyl-(R)-carnitine(in) = O-3-methylbutanoyl-(R)-carnitine(out). The enzyme catalyses O-hexanoyl-(R)-carnitine(in) = O-hexanoyl-(R)-carnitine(out). It carries out the reaction L-histidyl-L-proline diketopiperazine(in) = L-histidyl-L-proline diketopiperazine(out). The catalysed reaction is (R)-salsolinol(in) = (R)-salsolinol(out). It catalyses the reaction prostaglandin F2alpha(out) = prostaglandin F2alpha(in). The enzyme catalyses prostaglandin E2(out) = prostaglandin E2(in). With respect to regulation, phosphorylation of the transporter leads to changes in its substrate affinity, resulting in a regulation of the transport activity. In contrast with rat ortholog, ASP uptake is inhibited by protein kinase A (PKA) and C (PKC) activation. ASP uptake is also endogenously activated by calmodulin, the calmodulin-dependent kinase II and LCK tyrosine kinase. Inhibited by cGMP, most likely through a cGMP-binding protein that interacts with OCT1. In terms of biological role, electrogenic voltage-dependent transporter that mediates the transport of a variety of organic cations such as endogenous bioactive amines, cationic drugs and xenobiotics. Functions as a pH- and Na(+)-independent, bidirectional transporter. Cation cellular uptake or release is driven by the electrochemical potential (i.e. membrane potential and concentration gradient) and substrate selectivity. Hydrophobicity is a major requirement for recognition in polyvalent substrates and inhibitors. Primarily expressed in the basolateral membrane of hepatocytes and proximal tubules and involved in the uptake and disposition of cationic compounds from the blood by hepatic and renal clearance. Most likely functions as an uptake carrier in enterocytes contributing to the intestinal elimination of organic cations from the systemic circulation. Transports endogenous monoamines such as N-1-methylnicotinamide (NMN), guanidine, neurotransmitters dopamine, serotonin, noradrenaline, adrenaline and histamine, and quaternary ammonium compound such as choline. Also transports natural polyamines such as spermidine, agmatine and putrescine at low affinity, but relatively high turnover. Involved in the hepatic and intestinal uptake of the vitamin B1/thiamine, hence regulating hepatic lipid and energy metabolism. Contributes to the influx and efflux of fatty acid carriers carnitines and acylcarnitines across the basolateral membrane of hepatocytes, from the liver to the systemic circulation and inversely and may be involved in regulating the systemic availability of hepatic acylcarnitines. Also capable of transporting non-amine endogenous compounds such as prostaglandin E2 (PGE2) and prostaglandin F2-alpha (PGF2-alpha). May contribute to the transport of cationic compounds in testes across the blood-testis-barrier. Also mediates the uptake of xenobiotics tributylmethylammonium (TBuMA), quinidine, N-methyl-quinine (NMQ), N-methyl-quinidine (NMQD) N-(4,4-azo-n-pentyl)-quinuclidine (APQ), azidoprocainamide methoiodide (AMP), N-(4,4-azo-n-pentyl)-21-deoxyajmalinium (APDA) and 4-(4-(dimethylamino)styryl)-N-methylpyridinium (ASP). In Bos taurus (Bovine), this protein is Solute carrier family 22 member 1 (SLC22A1).